We begin with the raw amino-acid sequence, 351 residues long: Spermidine/putrescine import ATP-binding protein PotA (351 aa).

The region spanning 6 to 236 (LELRNVTKEY…PENAWVANFI (231 aa)) is the ABC transporter domain. 38–45 (GPSGCGKT) serves as a coordination point for ATP.

Belongs to the ABC transporter superfamily. Spermidine/putrescine importer (TC 3.A.1.11.1) family. The complex is composed of two ATP-binding proteins (PotA), two transmembrane proteins (PotB and PotC) and a solute-binding protein (PotD).

Its subcellular location is the cell membrane. The enzyme catalyses ATP + H2O + polyamine-[polyamine-binding protein]Side 1 = ADP + phosphate + polyamineSide 2 + [polyamine-binding protein]Side 1.. In terms of biological role, part of the ABC transporter complex PotABCD involved in spermidine/putrescine import. Responsible for energy coupling to the transport system. This chain is Spermidine/putrescine import ATP-binding protein PotA, found in Mycoplasma mycoides subsp. mycoides SC (strain CCUG 32753 / NCTC 10114 / PG1).